Reading from the N-terminus, the 274-residue chain is 3-methyl-2-oxobutanoate hydroxymethyltransferase (274 aa).

Mg(2+) contacts are provided by Asp-49 and Asp-88. 3-methyl-2-oxobutanoate-binding positions include 49–50 (DS), Asp-88, and Lys-118. Position 120 (Glu-120) interacts with Mg(2+). The active-site Proton acceptor is Glu-187.

This sequence belongs to the PanB family. Homodecamer; pentamer of dimers. Requires Mg(2+) as cofactor.

The protein resides in the cytoplasm. The enzyme catalyses 3-methyl-2-oxobutanoate + (6R)-5,10-methylene-5,6,7,8-tetrahydrofolate + H2O = 2-dehydropantoate + (6S)-5,6,7,8-tetrahydrofolate. The protein operates within cofactor biosynthesis; (R)-pantothenate biosynthesis; (R)-pantoate from 3-methyl-2-oxobutanoate: step 1/2. Its function is as follows. Catalyzes the reversible reaction in which hydroxymethyl group from 5,10-methylenetetrahydrofolate is transferred onto alpha-ketoisovalerate to form ketopantoate. The chain is 3-methyl-2-oxobutanoate hydroxymethyltransferase from Rhodopseudomonas palustris (strain BisB5).